The following is a 394-amino-acid chain: Glycogen synthase kinase 1 (394 aa).

In terms of domain architecture, Protein kinase spans 35–318; sequence YTQCKIVGNG…AIDAMVHPFF (284 aa). ATP contacts are provided by residues 41 to 49 and Lys-64; that span reads VGNGSFGVV.

It belongs to the protein kinase superfamily. CMGC Ser/Thr protein kinase family. GSK-3 subfamily.

It is found in the cytoplasm. The enzyme catalyses L-seryl-[protein] + ATP = O-phospho-L-seryl-[protein] + ADP + H(+). In terms of biological role, protein kinase that acts downstream of the MPS1 MAPK cascade as a highly conservative signal modulator that dictates growth, conidiation and pathogenicity. Phosphorylates HAT1 at 'Ser-8' to block its translocation from the nucleus to the cytoplasm where HAT1 positively regulates appressorium development and pathogenicity. The sequence is that of Glycogen synthase kinase 1 from Pyricularia oryzae (Rice blast fungus).